A 302-amino-acid polypeptide reads, in one-letter code: Glycine--tRNA ligase alpha subunit (302 aa).

Belongs to the class-II aminoacyl-tRNA synthetase family. In terms of assembly, tetramer of two alpha and two beta subunits.

It localises to the cytoplasm. The catalysed reaction is tRNA(Gly) + glycine + ATP = glycyl-tRNA(Gly) + AMP + diphosphate. This is Glycine--tRNA ligase alpha subunit from Xanthomonas oryzae pv. oryzae (strain MAFF 311018).